Consider the following 338-residue polypeptide: Ribosomal RNA small subunit methyltransferase C (338 aa).

Belongs to the methyltransferase superfamily. RsmC family. Monomer.

It localises to the cytoplasm. The catalysed reaction is guanosine(1207) in 16S rRNA + S-adenosyl-L-methionine = N(2)-methylguanosine(1207) in 16S rRNA + S-adenosyl-L-homocysteine + H(+). Its function is as follows. Specifically methylates the guanine in position 1207 of 16S rRNA in the 30S particle. In Buchnera aphidicola subsp. Acyrthosiphon pisum (strain APS) (Acyrthosiphon pisum symbiotic bacterium), this protein is Ribosomal RNA small subunit methyltransferase C.